The primary structure comprises 58 residues: Large ribosomal subunit protein uL30 (58 aa).

Belongs to the universal ribosomal protein uL30 family. As to quaternary structure, part of the 50S ribosomal subunit.

This Pseudomonas entomophila (strain L48) protein is Large ribosomal subunit protein uL30.